The chain runs to 335 residues: NADH-ubiquinone oxidoreductase chain 2 (335 aa).

Transmembrane regions (helical) follow at residues 7–27, 28–48, 58–78, 81–101, 110–130, 147–167, 174–194, 200–220, 240–260, 274–294, and 315–335; these read PTMALAMSTLIMSTLMAVSSA, NWMFLWGAMELNLLSFIPIMM, GAVKYFLAQALGSALLLMSST, WMTFSMISNFMPLTLMAAIML, FWYPSVMASISWVSCLILSSW, NMNFMLSMAAMNALLGGVIGM, TIMAYSSIGHIGWMMSLAAVY, IMYFVVYCILITPLFMTMGYL, MALLMVLLSLGGLPPFTGFMP, IILLILIAGSIMNLFFYLNII, and SLKFVIPICTLSLGLSPFIML.

It belongs to the complex I subunit 2 family.

It is found in the mitochondrion inner membrane. It catalyses the reaction a ubiquinone + NADH + 5 H(+)(in) = a ubiquinol + NAD(+) + 4 H(+)(out). Its function is as follows. Core subunit of the mitochondrial membrane respiratory chain NADH dehydrogenase (Complex I) that is believed to belong to the minimal assembly required for catalysis. Complex I functions in the transfer of electrons from NADH to the respiratory chain. The immediate electron acceptor for the enzyme is believed to be ubiquinone. The polypeptide is NADH-ubiquinone oxidoreductase chain 2 (ND2) (Lumbricus terrestris (Common earthworm)).